The sequence spans 178 residues: Peptide deformylase (178 aa).

Fe cation contacts are provided by Cys96 and His138. The active site involves Glu139. Residue His142 participates in Fe cation binding.

This sequence belongs to the polypeptide deformylase family. It depends on Fe(2+) as a cofactor.

It carries out the reaction N-terminal N-formyl-L-methionyl-[peptide] + H2O = N-terminal L-methionyl-[peptide] + formate. In terms of biological role, removes the formyl group from the N-terminal Met of newly synthesized proteins. Requires at least a dipeptide for an efficient rate of reaction. N-terminal L-methionine is a prerequisite for activity but the enzyme has broad specificity at other positions. The protein is Peptide deformylase of Bartonella tribocorum (strain CIP 105476 / IBS 506).